The following is a 145-amino-acid chain: Cell wall synthesis protein CwsA (145 aa).

Residues 104–124 form a helical membrane-spanning segment; it reads WIFAGIAAAILAGGAVAFSIV.

The protein belongs to the CwsA family.

It localises to the cell membrane. Functionally, required for regulated cell division, cell wall synthesis and the maintenance of cell shape. This is Cell wall synthesis protein CwsA from Mycobacterium bovis (strain ATCC BAA-935 / AF2122/97).